Reading from the N-terminus, the 502-residue chain is UDP-N-acetylmuramoylalanine--D-glutamate ligase (502 aa).

129–135 (GTNGKTT) provides a ligand contact to ATP. The disordered stretch occupies residues 288–307 (APDETTSRRRKRDGAHTPDI).

It belongs to the MurCDEF family.

The protein localises to the cytoplasm. It carries out the reaction UDP-N-acetyl-alpha-D-muramoyl-L-alanine + D-glutamate + ATP = UDP-N-acetyl-alpha-D-muramoyl-L-alanyl-D-glutamate + ADP + phosphate + H(+). It participates in cell wall biogenesis; peptidoglycan biosynthesis. Its function is as follows. Cell wall formation. Catalyzes the addition of glutamate to the nucleotide precursor UDP-N-acetylmuramoyl-L-alanine (UMA). The protein is UDP-N-acetylmuramoylalanine--D-glutamate ligase of Burkholderia ambifaria (strain ATCC BAA-244 / DSM 16087 / CCUG 44356 / LMG 19182 / AMMD) (Burkholderia cepacia (strain AMMD)).